The primary structure comprises 187 residues: Homeobox protein engrailed-like ceh-16 (187 aa).

3 disordered regions span residues 14–43 (PYPC…NGTP), 60–100 (SDRP…DQLD), and 144–167 (KSTS…HPSI). The segment covering 20 to 39 (PTISTPATSPSSISPTFASP) has biased composition (low complexity). Positions 87-146 (EKRPRTAFTGDQLDRLKTEFRESRYLTEKRRQELAHELGLNESQIKIWFQNKRAKLKKST) form a DNA-binding region, homeobox. Over residues 145–163 (STSSVPRDRCSSVTPNPHN) the composition is skewed to polar residues.

The protein belongs to the engrailed homeobox family. Expressed in seam cells.

The protein resides in the nucleus. It is found in the cytoplasm. In terms of biological role, transcriptional regulator which binds to DNA to regulate gene expression and promote seam cell development and differentiation during embryogenesis. Plays a role in maintaining the boundaries between the lateral rows of seam cells and the ventral and dorsal row of epidermal cells during embryonic development. Negatively regulates the expression of the fusion effector protein eff-1 to prevent seam cell fusion with the dorsal and ventral epidermal cells during embryonic elongation. Positively regulates seam cell self-renewal and expansion during the L2 larval stage to promote seam cell development. This role does not seem to be via regulation of eff-1 expression. Specifically, it is required for the asymmetric division of the V5.p seam cell during the L2 larval stage, and in turn the asymmetric nuclear distribution of pop-1 in V5.p daughter cells. This is Homeobox protein engrailed-like ceh-16 from Caenorhabditis elegans.